The primary structure comprises 580 residues: MSTNGGAPSQKRSWLPSRPLLTTTTQTYPPPLLPFKKLHAPPTAARRSLPPAASKPMASSSSSSLPAAWAAAVRAWAVAPALRAAVWACLAMSAMLVAEAAWMGLASLAAAAARRLRGYGYRWEPMAAPPDVEAPAPAPAEFPMVLVQIPMYNEKEVYKLSIGAACALTWPPDRIIIQVLDDSTDPFVKELVELECKEWASKKINIKYEVRNNRKGYKAGALRKGMEHTYAQLCDFVAIFDADFEPESDFLLKTMPYLLHNPKIALVQTRWEFVNYNVCLMTRIQKMSLDYHFKVEQESGSFMHAFFGFNGTAGVWRVSAINQSGGWKDRTTVEDMDLAVRASLKGWEFLYVGDIRVKSELPSTFQAYRHQQHRWTCGAANLFRKMAWEIITNKEVSMWKKYHLLYSFFFVRRAIAPILTFLFYCIVIPLSAMVPEVTIPVWGLVYIPTAITIMNAIRNPGSVHLMPFWILFENVMAMHRMRAALSGLLETARANDWVVTEKVGDQVKDELDVPLLEPLKPTECAERIYIPELLLALYLLICASYDFVLGNHKYYIYIYLQAVAFTVMGFGFVGTRTPCS.

Residues 1 to 12 are compositionally biased toward polar residues; sequence MSTNGGAPSQKR. The disordered stretch occupies residues 1-33; the sequence is MSTNGGAPSQKRSWLPSRPLLTTTTQTYPPPLL. A compositionally biased stretch (low complexity) spans 15-27; it reads LPSRPLLTTTTQT. The chain crosses the membrane as a helical span at residues 85-105; it reads AVWACLAMSAMLVAEAAWMGL. The active site involves Asp-182. Residues Asp-241 and Asp-243 each coordinate substrate. Asp-335 is an active-site residue. 4 helical membrane-spanning segments follow: residues 414-434, 437-457, 528-548, and 554-574; these read AIAPILTFLFYCIVIPLSAMV, VTIPVWGLVYIPTAITIMNAI, IYIPELLLALYLLICASYDFV, and YYIYIYLQAVAFTVMGFGFVG.

This sequence belongs to the glycosyltransferase 2 family. Plant cellulose synthase-like A subfamily.

It localises to the golgi apparatus membrane. It catalyses the reaction GDP-mannose + (glucomannan)n = GDP + (glucomannan)n+1.. In terms of biological role, probable mannan synthase which consists of a 4-beta-mannosyltransferase activity on mannan using GDP-mannose. The beta-1,4-mannan product is the backbone for galactomannan synthesis by galactomannan galactosyltransferase. Galactomannan is a noncellulosic polysaccharides of plant cell wall. This is Probable glucomannan 4-beta-mannosyltransferase 2 from Oryza sativa subsp. japonica (Rice).